Reading from the N-terminus, the 127-residue chain is Phosphoribosyl-AMP cyclohydrolase (127 aa).

Position 75 (D75) interacts with Mg(2+). C76 provides a ligand contact to Zn(2+). 2 residues coordinate Mg(2+): D77 and D79. Positions 93 and 100 each coordinate Zn(2+).

This sequence belongs to the PRA-CH family. In terms of assembly, homodimer. Requires Mg(2+) as cofactor. It depends on Zn(2+) as a cofactor.

It is found in the cytoplasm. The catalysed reaction is 1-(5-phospho-beta-D-ribosyl)-5'-AMP + H2O = 1-(5-phospho-beta-D-ribosyl)-5-[(5-phospho-beta-D-ribosylamino)methylideneamino]imidazole-4-carboxamide. Its pathway is amino-acid biosynthesis; L-histidine biosynthesis; L-histidine from 5-phospho-alpha-D-ribose 1-diphosphate: step 3/9. Catalyzes the hydrolysis of the adenine ring of phosphoribosyl-AMP. In Desulfotalea psychrophila (strain LSv54 / DSM 12343), this protein is Phosphoribosyl-AMP cyclohydrolase.